A 199-amino-acid chain; its full sequence is dITP/XTP pyrophosphatase (199 aa).

7-12 serves as a coordination point for substrate; it reads TGNAGK. The active-site Proton acceptor is the D68. Position 68 (D68) interacts with Mg(2+). Residues S69, 153 to 156, K176, and 181 to 182 each bind substrate; these read FGYD and HR.

It belongs to the HAM1 NTPase family. As to quaternary structure, homodimer. Mg(2+) serves as cofactor.

It catalyses the reaction XTP + H2O = XMP + diphosphate + H(+). It carries out the reaction dITP + H2O = dIMP + diphosphate + H(+). The enzyme catalyses ITP + H2O = IMP + diphosphate + H(+). In terms of biological role, pyrophosphatase that catalyzes the hydrolysis of nucleoside triphosphates to their monophosphate derivatives, with a high preference for the non-canonical purine nucleotides XTP (xanthosine triphosphate), dITP (deoxyinosine triphosphate) and ITP. Seems to function as a house-cleaning enzyme that removes non-canonical purine nucleotides from the nucleotide pool, thus preventing their incorporation into DNA/RNA and avoiding chromosomal lesions. The sequence is that of dITP/XTP pyrophosphatase from Halorhodospira halophila (strain DSM 244 / SL1) (Ectothiorhodospira halophila (strain DSM 244 / SL1)).